The primary structure comprises 187 residues: Frataxin, mitochondrial (187 aa).

This sequence belongs to the frataxin family. Monomer. Oligomer. Interacts with NIFS1.

The protein localises to the mitochondrion. The enzyme catalyses 4 Fe(2+) + O2 + 4 H(+) = 4 Fe(3+) + 2 H2O. Its function is as follows. Promotes the biosynthesis of heme as well as the assembly and repair of iron-sulfur clusters by delivering Fe(2+) to proteins involved in these pathways. May play a role in the protection against iron-catalyzed oxidative stress through its ability to catalyze the oxidation of Fe(2+) to Fe(3+). May be able to store large amounts of the metal in the form of a ferrihydrite mineral by oligomerization. Binds to the mitochondrial cysteine desulfurase NIFS1 and increases its activity. In Arabidopsis thaliana (Mouse-ear cress), this protein is Frataxin, mitochondrial (FH).